The chain runs to 336 residues: D-erythrose-4-phosphate dehydrogenase (336 aa).

Residues 11–12 and arginine 80 contribute to the NAD(+) site; that span reads RI. Substrate-binding positions include 153–155, arginine 199, 212–213, and arginine 235; these read SCT and TK. The active-site Nucleophile is cysteine 154. An NAD(+)-binding site is contributed by asparagine 317.

The protein belongs to the glyceraldehyde-3-phosphate dehydrogenase family. Epd subfamily. In terms of assembly, homotetramer.

Its subcellular location is the cytoplasm. The catalysed reaction is D-erythrose 4-phosphate + NAD(+) + H2O = 4-phospho-D-erythronate + NADH + 2 H(+). The protein operates within cofactor biosynthesis; pyridoxine 5'-phosphate biosynthesis; pyridoxine 5'-phosphate from D-erythrose 4-phosphate: step 1/5. Its function is as follows. Catalyzes the NAD-dependent conversion of D-erythrose 4-phosphate to 4-phosphoerythronate. This Aeromonas hydrophila subsp. hydrophila (strain ATCC 7966 / DSM 30187 / BCRC 13018 / CCUG 14551 / JCM 1027 / KCTC 2358 / NCIMB 9240 / NCTC 8049) protein is D-erythrose-4-phosphate dehydrogenase.